We begin with the raw amino-acid sequence, 1888 residues long: MAAAAAAAVGGQQPSQPELPAPGLALDKAATAAHLKAALSRPDNRAGAEELQALLERVLSAERPLAAAAGGEDAAAAGGGGGPGAAEEEALEWCKCLLAGGGGYDEFCAAVRAYDPAALCGLVWTANFVAYRCRTCGISPCMSLCAECFHQGDHTGHDFNMFRSQAGGACDCGDSNVMRESGFCKRHQIKSSSNIPCVPKDLLMMSEFVLPRFIFCLIQYLREGYNEPAADGPSEKDLNKVLQLLEPQISFLEDLTKMGGAMRSVLTQVLTNQQNYKDLTSGLGENACVKKSHEKYLIALKSSGLTYPEDKLVYGVQEPSAGTSSLAVQGFIGATGTLGQVDSSDEDDQDGSQGLGKRKRVKLSSGTKDQSIMDVLKHKSFLEELLFWTIKYEFPQKMVTFLLNMLPDQEYKVAFTKTFVQHYAFIMKTLKKSHESDTMSNRIVHISVQLFSNEELARQVTEECQLLDIMVTVLLYMMESCLIKSELQDEENSLHVVVNCGEALLKNNTYWPLVSDFINILSHQSVAKRFLEDHGLLVTWMNFVSFFQGMNLNKRELNEHVEFESQTYYAAFAAELEACAQPMWGLLSHCKVRETQEYTRNVVRYCLEALQDWFDAINFVDEPAPNQVTFHLPLHRYYAMFLSKAVKCQELDLDSVLPDQEMLMKLMIHPLQIQASLAEIHSNMWVRNGLQIKGQAMTYVQSHFCNSMIDPDIYLLQVCASRLDPDYFISSVFERFKVVDLLTMASQHQNTVLDAEHERSMLEGALTFLVILLSLRLHLGMSDDEILRAEMVAQLCMNDRTHSSLLDLIPENPNPKSGIIPGSYSFESVLSAVADFKAPVFEPGGSMQQGMYTPKAEVWDQEFDPVMVILRTVYRRDVQSAMDRYTAFLKQSGKFPGNPWPPYKKRTSLHPSYKGLMRLLHCKTLHIVLFTLLYKILMDHQNLSEHVLCMVLYLIELGLENSAEEESDEEASVGGPERCHDSWFPGSNLVSNMRHFINYVRVRVPETAPEVKRDSPASTSSDNLGSLQNSGTAQVFSLVAERRKKFQEIINRSSSEANQVVRPKTSSKWSAPGSAPQLTTAILEIKESILSLLIKLHHKLSGKQNSYYPPWLDDIEILIQPEIPKYSHGDGITAVERILLKAASQSRMNKRIIEEICRKVTPPVPPKKVTAAEKKTLDKEERRQKARERQQKLLAEFASRQKSFMETAMDVDSPENDIPMEITTAEPQVSEAVYDCVICGQSGPSSEDRPTGLVVLLQASSVLGQCRDNVEPKKLPISEEEQIYPWDTCAAVHDVRLSLLQRYFKDSSCLLAVSIGWEGGVYVQTCGHTLHIDCHKSYMESLRNDQVLQGFSVDKGEFTCPLCRQFANSVLPCYPGSNVENNPWQRPSNKSIQDLIKEVEELQGRPGAFPSETNLSKEMESVMKDIKNTTQKKYRDYSKTPGSPDNDFLFMYSVARTNLELELIHRGGNLCSGGASTAGKRSCLNQLFHVLALHMRLYSIDSEYNPWRKLTQLEEMNPQLGYEEQQPEVPILYHDVTSLLLIQILMMPQPLRKDHFTCIVKVLFTLLYTQALAALSVKCSEEDRSAWKHAGALKKSTCDAEKSYEVLLSFVISELFKGKLYHEEGTQECAMVNPIAWSPESMEKCLQDFCLPFLRITSLLQHHLFGEDLPSCQEEEEFSVLASCLGLLPTFYQTEHPFISASCLDWPVPAFDIITQWCFEIKSFTERHAEQGKALLIQESKWKLPHLLQLPENYNTIFQYYHRKTCSVCTKVPKDPAVCLVCGTFVCLKGLCCKQQSYCECVLHSQNCGAGTGIFLLINASVIIIIRGHRFCLWGSVYLDAHGEEDRDLRRGKPLYICKERYKVLEQQWISHTFDHINKRWGPHYNGL.

The disordered stretch occupies residues 1–24 (MAAAAAAAVGGQQPSQPELPAPGL). The UBR-type zinc-finger motif lies at 118 to 189 (ALCGLVWTAN…ESGFCKRHQI (72 aa)). Residues 339–362 (GQVDSSDEDDQDGSQGLGKRKRVK) are disordered. Residues serine 343 and serine 344 each carry the phosphoserine modification. 2 helical membrane-spanning segments follow: residues 761-781 (MLEG…HLGM) and 919-939 (LLHC…ILMD). Disordered regions lie at residues 1008–1028 (APEV…GSLQ) and 1164–1186 (VPPK…RQKA). Residues 1016 to 1028 (PASTSSDNLGSLQ) show a composition bias toward polar residues. The stretch at 1168–1199 (KVTAAEKKTLDKEERRQKARERQQKLLAEFAS) forms a coiled coil. The span at 1170 to 1186 (TAAEKKTLDKEERRQKA) shows a compositional bias: basic and acidic residues. Residue serine 1199 is modified to Phosphoserine. The RING-type; degenerate zinc-finger motif lies at 1306 to 1364 (DSSCLLAVSIGWEGGVYVQTCGHTLHIDCHKSYMESLRNDQVLQGFSVDKGEFTCPLCR). A helical transmembrane segment spans residues 1806-1826 (QNCGAGTGIFLLINASVIIII).

It belongs to the E3 ubiquitin-protein ligase UBR1-like family. As to quaternary structure, interacts with UBE2A and UBE2B.

The protein resides in the membrane. It catalyses the reaction S-ubiquitinyl-[E2 ubiquitin-conjugating enzyme]-L-cysteine + [acceptor protein]-L-lysine = [E2 ubiquitin-conjugating enzyme]-L-cysteine + N(6)-ubiquitinyl-[acceptor protein]-L-lysine.. Its pathway is protein modification; protein ubiquitination. Functionally, E3 ubiquitin-protein ligase which is a component of the N-end rule pathway. Does not bind to proteins bearing specific N-terminal residues that are destabilizing according to the N-end rule, leading to their ubiquitination and subsequent degradation. May play a role in Shh signaling by mediating the ubiquitination of Kif7. May be important for MYH9 function in certain tissues, possibly by regulating the ubiquitination of MYH9 and consequently affecting its interaction with MYO7A. The polypeptide is E3 ubiquitin-protein ligase UBR3 (UBR3) (Homo sapiens (Human)).